A 244-amino-acid chain; its full sequence is 15,16-dihydrobiliverdin:ferredoxin oxidoreductase (244 aa).

Belongs to the HY2 family.

The enzyme catalyses 15,16-dihydrobiliverdin + oxidized 2[4Fe-4S]-[ferredoxin] = biliverdin IXalpha + reduced 2[4Fe-4S]-[ferredoxin] + 2 H(+). Functionally, catalyzes the two-electron reduction of biliverdin IX-alpha at the C15 methine bridge. The sequence is that of 15,16-dihydrobiliverdin:ferredoxin oxidoreductase (pebA) from Nostoc punctiforme (strain ATCC 29133 / PCC 73102).